Consider the following 295-residue polypeptide: Ethanolamine ammonia-lyase small subunit (295 aa).

Adenosylcob(III)alamin is bound by residues valine 207, glutamate 228, and cysteine 258.

It belongs to the EutC family. The basic unit is a heterodimer which dimerizes to form tetramers. The heterotetramers trimerize; 6 large subunits form a core ring with 6 small subunits projecting outwards. Requires adenosylcob(III)alamin as cofactor.

It is found in the bacterial microcompartment. It carries out the reaction ethanolamine = acetaldehyde + NH4(+). It functions in the pathway amine and polyamine degradation; ethanolamine degradation. Its function is as follows. Catalyzes the deamination of various vicinal amino-alcohols to oxo compounds. Allows this organism to utilize ethanolamine as the sole source of nitrogen and carbon in the presence of external vitamin B12. The chain is Ethanolamine ammonia-lyase small subunit from Escherichia coli (strain SMS-3-5 / SECEC).